A 311-amino-acid chain; its full sequence is Methionyl-tRNA formyltransferase (311 aa).

Residue 109-112 (SLLP) coordinates (6S)-5,6,7,8-tetrahydrofolate.

This sequence belongs to the Fmt family.

The catalysed reaction is L-methionyl-tRNA(fMet) + (6R)-10-formyltetrahydrofolate = N-formyl-L-methionyl-tRNA(fMet) + (6S)-5,6,7,8-tetrahydrofolate + H(+). In terms of biological role, attaches a formyl group to the free amino group of methionyl-tRNA(fMet). The formyl group appears to play a dual role in the initiator identity of N-formylmethionyl-tRNA by promoting its recognition by IF2 and preventing the misappropriation of this tRNA by the elongation apparatus. The protein is Methionyl-tRNA formyltransferase of Staphylococcus aureus (strain MW2).